The following is a 372-amino-acid chain: N-methyl-L-tryptophan oxidase (372 aa).

4-34 (DLIIIGSGSVGAAAGYYATRAGLKVLMTDAH) contributes to the FAD binding site. An S-8alpha-FAD cysteine modification is found at C307.

It belongs to the MSOX/MTOX family. MTOX subfamily. Monomer. It depends on FAD as a cofactor.

The enzyme catalyses N(alpha)-methyl-L-tryptophan + O2 + H2O = L-tryptophan + formaldehyde + H2O2. Catalyzes the oxidative demethylation of N-methyl-L-tryptophan. The chain is N-methyl-L-tryptophan oxidase from Citrobacter koseri (strain ATCC BAA-895 / CDC 4225-83 / SGSC4696).